Consider the following 442-residue polypeptide: 3-phosphoshikimate 1-carboxyvinyltransferase (442 aa).

3-phosphoshikimate contacts are provided by lysine 25, serine 26, and arginine 30. A phosphoenolpyruvate-binding site is contributed by lysine 25. Phosphoenolpyruvate is bound by residues glycine 96 and arginine 124. Positions 171, 172, 173, 203, 325, and 352 each coordinate 3-phosphoshikimate. Glutamine 173 lines the phosphoenolpyruvate pocket. Aspartate 325 acts as the Proton acceptor in catalysis. Residues arginine 356, arginine 400, and lysine 425 each contribute to the phosphoenolpyruvate site.

The protein belongs to the EPSP synthase family. As to quaternary structure, monomer.

The protein localises to the cytoplasm. It catalyses the reaction 3-phosphoshikimate + phosphoenolpyruvate = 5-O-(1-carboxyvinyl)-3-phosphoshikimate + phosphate. It participates in metabolic intermediate biosynthesis; chorismate biosynthesis; chorismate from D-erythrose 4-phosphate and phosphoenolpyruvate: step 6/7. Catalyzes the transfer of the enolpyruvyl moiety of phosphoenolpyruvate (PEP) to the 5-hydroxyl of shikimate-3-phosphate (S3P) to produce enolpyruvyl shikimate-3-phosphate and inorganic phosphate. The polypeptide is 3-phosphoshikimate 1-carboxyvinyltransferase (Bordetella bronchiseptica (strain ATCC BAA-588 / NCTC 13252 / RB50) (Alcaligenes bronchisepticus)).